We begin with the raw amino-acid sequence, 305 residues long: MAKRANWSLDGQQSSGGGAASWICACTDKISIAKALTRSLSVMLSRPTALLRTGARWRVSLTASGRSTVRCASTVAGWQGGLSWPQGKQPTPYEVLGLVKTGVDARQLKKRYHELAKLYHPDTAGAAQQGLGEHERLRRFKLVNEAYALLSDASRRRMYDMYATGWAHGPAPMAPAMAHGAYHERYAYYNAGTWEDMQDLNSDRQQVQFSAWGMVVWALCMLAGFQVMAFLIRLEERTSKSAHTHEEAEHALLLAHLNYGLDQDRVSRVRRFLWFRSWGLYRTKAELDEAARTNEALVRQLEGGK.

In terms of domain architecture, J spans 91–163 (TPYEVLGLVK…SRRRMYDMYA (73 aa)). The chain crosses the membrane as a helical span at residues 212–232 (WGMVVWALCMLAGFQVMAFLI).

It belongs to the DnaJ family.

Its subcellular location is the mitochondrion membrane. Functionally, probable chaperone. The polypeptide is J domain-containing protein 1 (JID1) (Eremothecium gossypii (strain ATCC 10895 / CBS 109.51 / FGSC 9923 / NRRL Y-1056) (Yeast)).